Consider the following 332-residue polypeptide: Malate dehydrogenase, cytoplasmic (332 aa).

NAD(+) contacts are provided by residues Gln16–Ile17, Asp43, and Gly90. Position 99 (Arg99) interacts with oxaloacetate. NAD(+) is bound by residues Gln113 and Asn132. Oxaloacetate-binding residues include Asn132, Arg163, His188, and Ser243. The active-site Proton acceptor is the His188.

The protein belongs to the LDH/MDH superfamily. MDH type 2 family. In terms of assembly, homodimer.

It localises to the cytoplasm. The catalysed reaction is (S)-malate + NAD(+) = oxaloacetate + NADH + H(+). The polypeptide is Malate dehydrogenase, cytoplasmic (CMDH) (Medicago sativa (Alfalfa)).